A 120-amino-acid chain; its full sequence is Protein ORF-C (120 aa).

The protein localises to the host mitochondrion. Its function is as follows. Induces alteration of mitochondrial function that results in apoptosis contributing to tumor regression. The chain is Protein ORF-C (orfC) from Walleye dermal sarcoma virus (WDSV).